Reading from the N-terminus, the 333-residue chain is T-cell surface glycoprotein CD1c (333 aa).

Residues 1-17 (MLFLQFLLLALLLPGGD) form the signal peptide. At 18 to 302 (NADASQEHVS…ILYWGHHFSM (285 aa)) the chain is on the extracellular side. Residues Asn38, Asn70, Asn75, and Asn146 are each glycosylated (N-linked (GlcNAc...) asparagine). 2 disulfides stabilise this stretch: Cys120–Cys185 and Cys225–Cys280. An Ig-like domain is found at 206–296 (PEAWLSSRPS…LGGQDIILYW (91 aa)). Residues 303 to 323 (NWIALVVIVPLVILIVLVLWF) traverse the membrane as a helical segment. The Cytoplasmic portion of the chain corresponds to 324-333 (KKHCSYQDIL). The Internalization signal signature appears at 329–332 (YQDI).

Heterodimer with B2M (beta-2-microglobulin). In terms of tissue distribution, expressed on cortical thymocytes, on certain T-cell leukemias, and in various other tissues.

It localises to the cell membrane. The protein resides in the endosome membrane. Its subcellular location is the lysosome. Functionally, antigen-presenting protein that binds self and non-self lipid and glycolipid antigens and presents them to T-cell receptors on natural killer T-cells. In Homo sapiens (Human), this protein is T-cell surface glycoprotein CD1c (CD1C).